The primary structure comprises 525 residues: GMP synthase [glutamine-hydrolyzing] (525 aa).

A Glutamine amidotransferase type-1 domain is found at 9 to 207 (RILILDFGSQ…ILDICECEAL (199 aa)). The active-site Nucleophile is Cys86. Active-site residues include His181 and Glu183. The GMPS ATP-PPase domain maps to 208–400 (WTPSKIAEDA…LGLPYDMVYR (193 aa)). 235–241 (SGGVDSS) is an ATP binding site.

Homodimer.

It catalyses the reaction XMP + L-glutamine + ATP + H2O = GMP + L-glutamate + AMP + diphosphate + 2 H(+). The protein operates within purine metabolism; GMP biosynthesis; GMP from XMP (L-Gln route): step 1/1. Functionally, catalyzes the synthesis of GMP from XMP. In Pseudomonas fluorescens (strain SBW25), this protein is GMP synthase [glutamine-hydrolyzing].